A 38-amino-acid chain; its full sequence is Photosystem II reaction center protein L (38 aa).

Residues 17–37 (SLFWGLLLIFVLAVLFSSYFF) traverse the membrane as a helical segment.

This sequence belongs to the PsbL family. PSII is composed of 1 copy each of membrane proteins PsbA, PsbB, PsbC, PsbD, PsbE, PsbF, PsbH, PsbI, PsbJ, PsbK, PsbL, PsbM, PsbT, PsbX, PsbY, PsbZ, Psb30/Ycf12, at least 3 peripheral proteins of the oxygen-evolving complex and a large number of cofactors. It forms dimeric complexes.

It localises to the plastid. The protein localises to the chloroplast thylakoid membrane. Its function is as follows. One of the components of the core complex of photosystem II (PSII). PSII is a light-driven water:plastoquinone oxidoreductase that uses light energy to abstract electrons from H(2)O, generating O(2) and a proton gradient subsequently used for ATP formation. It consists of a core antenna complex that captures photons, and an electron transfer chain that converts photonic excitation into a charge separation. This subunit is found at the monomer-monomer interface and is required for correct PSII assembly and/or dimerization. The sequence is that of Photosystem II reaction center protein L from Rhodomonas salina (Cryptomonas salina).